The sequence spans 493 residues: 3-octaprenyl-4-hydroxybenzoate carboxy-lyase (493 aa).

Residue N172 participates in Mn(2+) binding. Prenylated FMN is bound by residues 175 to 177 (IYR), 189 to 191 (RWL), and 194 to 195 (RG). Residue E238 participates in Mn(2+) binding. D287 acts as the Proton donor in catalysis.

Belongs to the UbiD family. As to quaternary structure, homohexamer. It depends on prenylated FMN as a cofactor. The cofactor is Mn(2+).

Its subcellular location is the cell membrane. The catalysed reaction is a 4-hydroxy-3-(all-trans-polyprenyl)benzoate + H(+) = a 2-(all-trans-polyprenyl)phenol + CO2. The protein operates within cofactor biosynthesis; ubiquinone biosynthesis. Its function is as follows. Catalyzes the decarboxylation of 3-octaprenyl-4-hydroxy benzoate to 2-octaprenylphenol, an intermediate step in ubiquinone biosynthesis. The protein is 3-octaprenyl-4-hydroxybenzoate carboxy-lyase of Shewanella woodyi (strain ATCC 51908 / MS32).